The chain runs to 580 residues: Adenine deaminase (580 aa).

This sequence belongs to the metallo-dependent hydrolases superfamily. Adenine deaminase family. Requires Mn(2+) as cofactor.

The catalysed reaction is adenine + H2O + H(+) = hypoxanthine + NH4(+). This Listeria monocytogenes serovar 1/2a (strain ATCC BAA-679 / EGD-e) protein is Adenine deaminase.